The primary structure comprises 67 residues: Large ribosomal subunit protein bL35 (67 aa).

The segment covering 1–16 (MPKMKTKSSAKKRFRV) has biased composition (basic residues). Positions 1 to 24 (MPKMKTKSSAKKRFRVRPGGTVKR) are disordered.

The protein belongs to the bacterial ribosomal protein bL35 family.

The sequence is that of Large ribosomal subunit protein bL35 from Delftia acidovorans (strain DSM 14801 / SPH-1).